Here is a 175-residue protein sequence, read N- to C-terminus: NADH dehydrogenase [ubiquinone] iron-sulfur protein 4, mitochondrial (175 aa).

The transit peptide at 1 to 42 (MAAVSMSVALRQALWGRRVATVAAVSVSKVSTRSLSTSTWRL) directs the protein to the mitochondrion. The interval 149–175 (ERKVPKPKSKSYGANFSWNKRTRVSTK) is disordered. Ser-173 bears the Phosphoserine mark.

The protein belongs to the complex I NDUFS4 subunit family. Mammalian complex I is composed of 45 different subunits. This is a component of the iron-sulfur (IP) fragment of the enzyme. Interacts with BCAP31 and TOMM40; the interaction mediates its translocation to the mitochondria; the interaction with BCAP31 is direct. In terms of processing, phosphorylated.

Its subcellular location is the mitochondrion inner membrane. Accessory subunit of the mitochondrial membrane respiratory chain NADH dehydrogenase (Complex I), that is believed not to be involved in catalysis. Complex I functions in the transfer of electrons from NADH to the respiratory chain. The immediate electron acceptor for the enzyme is believed to be ubiquinone. This Bos taurus (Bovine) protein is NADH dehydrogenase [ubiquinone] iron-sulfur protein 4, mitochondrial (NDUFS4).